A 363-amino-acid polypeptide reads, in one-letter code: NAD(P)H-quinone oxidoreductase subunit 1, chloroplastic (363 aa).

The next 6 helical transmembrane spans lie at 26 to 46 (IIWV…GVLV), 98 to 118 (FSIG…VIPF), 127 to 147 (LSIG…GLLM), 253 to 273 (FGLF…FVTV), 300 to 320 (VFGT…FLFI), and 336 to 356 (LLNL…LLTT).

It belongs to the complex I subunit 1 family. In terms of assembly, NDH is composed of at least 16 different subunits, 5 of which are encoded in the nucleus.

The protein resides in the plastid. Its subcellular location is the chloroplast thylakoid membrane. It carries out the reaction a plastoquinone + NADH + (n+1) H(+)(in) = a plastoquinol + NAD(+) + n H(+)(out). It catalyses the reaction a plastoquinone + NADPH + (n+1) H(+)(in) = a plastoquinol + NADP(+) + n H(+)(out). In terms of biological role, NDH shuttles electrons from NAD(P)H:plastoquinone, via FMN and iron-sulfur (Fe-S) centers, to quinones in the photosynthetic chain and possibly in a chloroplast respiratory chain. The immediate electron acceptor for the enzyme in this species is believed to be plastoquinone. Couples the redox reaction to proton translocation, and thus conserves the redox energy in a proton gradient. The polypeptide is NAD(P)H-quinone oxidoreductase subunit 1, chloroplastic (Helianthus annuus (Common sunflower)).